Here is a 260-residue protein sequence, read N- to C-terminus: Arginine esterase (260 aa).

The N-terminal stretch at 1–17 is a signal peptide; the sequence is MWFLALCLAMSLGWTGA. Positions 18–24 are cleaved as a propeptide — activation peptide; that stretch reads EPHFQPR. A Peptidase S1 domain is found at 25 to 257; it reads IIGGRECLKN…HLMWIKDTMK (233 aa). 5 cysteine pairs are disulfide-bonded: cysteine 31–cysteine 172, cysteine 50–cysteine 66, cysteine 151–cysteine 218, cysteine 183–cysteine 197, and cysteine 208–cysteine 233. Histidine 65 (charge relay system) is an active-site residue. Asparagine 79 carries an N-linked (GlcNAc...) asparagine glycan. The active-site Charge relay system is aspartate 119. The Charge relay system role is filled by serine 212.

The protein belongs to the peptidase S1 family. Kallikrein subfamily.

It carries out the reaction Preferential cleavage of Arg-|-Xaa bonds in small molecule substrates. Highly selective action to release kallidin (lysyl-bradykinin) from kininogen involves hydrolysis of Met-|-Xaa or Leu-|-Xaa.. Its function is as follows. This serine protease is found in dog seminal plasma, its exact physiological function is not known. The polypeptide is Arginine esterase (Canis lupus familiaris (Dog)).